The chain runs to 359 residues: Alpha-2-HS-glycoprotein (359 aa).

The first 18 residues, 1 to 18, serve as a signal peptide directing secretion; the sequence is MKSFVLLFCLAQLWGCHS. One can recognise a Cystatin fetuin-A-type 1 domain in the interval 27–133; sequence YKEPACDDPD…QFSVLFTKCD (107 aa). 6 cysteine pairs are disulfide-bonded: Cys-32/Cys-350, Cys-89/Cys-100, Cys-114/Cys-132, Cys-146/Cys-149, Cys-208/Cys-219, and Cys-230/Cys-248. N-linked (GlcNAc...) asparagine glycosylation occurs at Asn-99. Ser-134, Ser-135, and Ser-138 each carry phosphoserine. The 113-residue stretch at 144–256 folds into the Cystatin fetuin-A-type 2 domain; it reads KLCPDCPLLA…TCTLFQTQPV (113 aa). Residues Asn-156 and Asn-176 are each glycosylated (N-linked (GlcNAc...) asparagine). Positions 257 to 285 are disordered; that stretch reads IPQPQPDGAEAEAPSAVPDAAGPTPSAAG. O-linked (GalNAc...) serine glycosylation is present at Ser-271. Residues 276-285 show a composition bias toward low complexity; it reads AAGPTPSAAG. An O-linked (GalNAc...) threonine glycan is attached at Thr-280. 2 O-linked (GalNAc...) serine glycosylation sites follow: Ser-282 and Ser-296. Thr-314 is subject to Phosphothreonine. A phosphoserine mark is found at Ser-316, Ser-320, Ser-323, and Ser-325. An O-linked (GalNAc...) threonine glycan is attached at Thr-334. O-linked (GalNAc...) serine; partial glycosylation occurs at Ser-341.

Belongs to the fetuin family. Post-translationally, phosphorylated by FAM20C in the extracellular medium. As to expression, liver and bone.

It localises to the secreted. Its function is as follows. Promotes endocytosis, possesses opsonic properties and influences the mineral phase of bone. Suggested to have lymphocyte stimulating properties, lipid binding capability and to bind thyroid hormone. The chain is Alpha-2-HS-glycoprotein (AHSG) from Bos taurus (Bovine).